Here is a 433-residue protein sequence, read N- to C-terminus: UPF0597 protein PG_0909 (433 aa).

This sequence belongs to the UPF0597 family.

In Porphyromonas gingivalis (strain ATCC BAA-308 / W83), this protein is UPF0597 protein PG_0909.